The following is a 99-amino-acid chain: Small ribosomal subunit protein uS19 (99 aa).

Positions 77 to 99 are disordered; it reads TRTFHGHSGDKKAKVAKGGPGGR.

This sequence belongs to the universal ribosomal protein uS19 family.

Protein S19 forms a complex with S13 that binds strongly to the 16S ribosomal RNA. The protein is Small ribosomal subunit protein uS19 of Sorangium cellulosum (strain So ce56) (Polyangium cellulosum (strain So ce56)).